A 166-amino-acid polypeptide reads, in one-letter code: Myosin regulatory light chain 2, ventricular/cardiac muscle isoform (166 aa).

Residue Ala2 is modified to N,N,N-trimethylalanine. Ser14 and Ser15 each carry phosphoserine; by MLCK. Ser19 is subject to Phosphoserine. 3 EF-hand domains span residues 24–59, 94–129, and 130–165; these read TQIQ…LGRV, DPEE…QAER, and FSKE…GEEK. Residues Asp37, Asn39, Asp41, and Asp48 each coordinate Ca(2+). Thr52 is subject to Phosphothreonine.

As to quaternary structure, myosin is a hexamer of 2 heavy chains and 4 light chains. Interacts with MYOC. Post-translationally, N-terminus is methylated by METTL11A/NTM1. In terms of processing, phosphorylated by MYLK3 and MYLK2; promotes cardiac muscle contraction and function. Dephosphorylated by PPP1CB complexed to PPP1R12B. The phosphorylated form in adult is expressed as gradients across the heart from endocardium (low phosphorylation) to epicardium (high phosphorylation); regulates cardiac torsion and workload distribution. As to expression, abundantly expressed in both cardiac and slow skeletal muscle. In the adult heart, the phosphorylated form is highly expressed in epicardium and weakly in endocardium.

It localises to the cytoplasm. The protein localises to the myofibril. It is found in the sarcomere. Its subcellular location is the a band. Contractile protein that plays a role in heart development and function. Following phosphorylation, plays a role in cross-bridge cycling kinetics and cardiac muscle contraction by increasing myosin lever arm stiffness and promoting myosin head diffusion; as a consequence of the increase in maximum contraction force and calcium sensitivity of contraction force. These events altogether slow down myosin kinetics and prolong duty cycle resulting in accumulated myosins being cooperatively recruited to actin binding sites to sustain thin filament activation as a means to fine-tune myofilament calcium sensitivity to force. During cardiogenesis plays an early role in cardiac contractility by promoting cardiac myofibril assembly. This chain is Myosin regulatory light chain 2, ventricular/cardiac muscle isoform, found in Mus musculus (Mouse).